Here is a 227-residue protein sequence, read N- to C-terminus: Uracil-DNA glycosylase (227 aa).

Asp64 serves as the catalytic Proton acceptor.

This sequence belongs to the uracil-DNA glycosylase (UDG) superfamily. UNG family.

The protein resides in the cytoplasm. The catalysed reaction is Hydrolyzes single-stranded DNA or mismatched double-stranded DNA and polynucleotides, releasing free uracil.. Functionally, excises uracil residues from the DNA which can arise as a result of misincorporation of dUMP residues by DNA polymerase or due to deamination of cytosine. The sequence is that of Uracil-DNA glycosylase from Erwinia tasmaniensis (strain DSM 17950 / CFBP 7177 / CIP 109463 / NCPPB 4357 / Et1/99).